Reading from the N-terminus, the 376-residue chain is Erythronate-4-phosphate dehydrogenase (376 aa).

Residues Ser-45 and Thr-67 each contribute to the substrate site. NAD(+) contacts are provided by residues 127–128, Asp-147, and Thr-176; that span reads QV. Residue Arg-209 is part of the active site. Asp-233 is an NAD(+) binding site. Glu-238 is an active-site residue. Catalysis depends on His-255, which acts as the Proton donor. Gly-258 lines the NAD(+) pocket. Tyr-259 serves as a coordination point for substrate.

This sequence belongs to the D-isomer specific 2-hydroxyacid dehydrogenase family. PdxB subfamily. In terms of assembly, homodimer.

The protein resides in the cytoplasm. It carries out the reaction 4-phospho-D-erythronate + NAD(+) = (R)-3-hydroxy-2-oxo-4-phosphooxybutanoate + NADH + H(+). It participates in cofactor biosynthesis; pyridoxine 5'-phosphate biosynthesis; pyridoxine 5'-phosphate from D-erythrose 4-phosphate: step 2/5. In terms of biological role, catalyzes the oxidation of erythronate-4-phosphate to 3-hydroxy-2-oxo-4-phosphonooxybutanoate. This is Erythronate-4-phosphate dehydrogenase from Aliivibrio fischeri (strain ATCC 700601 / ES114) (Vibrio fischeri).